A 252-amino-acid polypeptide reads, in one-letter code: Aliphatic sulfonates import ATP-binding protein SsuB 1 (252 aa).

One can recognise an ABC transporter domain in the interval 6–234 (LQLHIAGKRF…PRDRQAHEAA (229 aa)). 38-45 (GASGCGKS) contacts ATP.

This sequence belongs to the ABC transporter superfamily. Aliphatic sulfonates importer (TC 3.A.1.17.2) family. As to quaternary structure, the complex is composed of two ATP-binding proteins (SsuB), two transmembrane proteins (SsuC) and a solute-binding protein (SsuA).

The protein localises to the cell inner membrane. The catalysed reaction is ATP + H2O + aliphatic sulfonate-[sulfonate-binding protein]Side 1 = ADP + phosphate + aliphatic sulfonateSide 2 + [sulfonate-binding protein]Side 1.. Functionally, part of the ABC transporter complex SsuABC involved in aliphatic sulfonates import. Responsible for energy coupling to the transport system. The sequence is that of Aliphatic sulfonates import ATP-binding protein SsuB 1 from Xanthomonas axonopodis pv. citri (strain 306).